The following is a 144-amino-acid chain: Large ribosomal subunit protein uL11 (144 aa).

Belongs to the universal ribosomal protein uL11 family. Part of the ribosomal stalk of the 50S ribosomal subunit. Interacts with L10 and the large rRNA to form the base of the stalk. L10 forms an elongated spine to which L12 dimers bind in a sequential fashion forming a multimeric L10(L12)X complex. Post-translationally, one or more lysine residues are methylated.

Functionally, forms part of the ribosomal stalk which helps the ribosome interact with GTP-bound translation factors. This is Large ribosomal subunit protein uL11 from Polaromonas sp. (strain JS666 / ATCC BAA-500).